Consider the following 233-residue polypeptide: Purine nucleoside phosphorylase DeoD-type (233 aa).

His-4 lines the a purine D-ribonucleoside pocket. Phosphate contacts are provided by residues Gly-20, Arg-24, Arg-43, and 87-90; that span reads RIGT. A purine D-ribonucleoside is bound by residues 179 to 181 and 203 to 204; these read EME and SD. Asp-204 (proton donor) is an active-site residue.

It belongs to the PNP/UDP phosphorylase family. Homohexamer; trimer of homodimers.

The catalysed reaction is a purine D-ribonucleoside + phosphate = a purine nucleobase + alpha-D-ribose 1-phosphate. The enzyme catalyses a purine 2'-deoxy-D-ribonucleoside + phosphate = a purine nucleobase + 2-deoxy-alpha-D-ribose 1-phosphate. Functionally, catalyzes the reversible phosphorolytic breakdown of the N-glycosidic bond in the beta-(deoxy)ribonucleoside molecules, with the formation of the corresponding free purine bases and pentose-1-phosphate. In Helicobacter pylori (strain G27), this protein is Purine nucleoside phosphorylase DeoD-type.